Reading from the N-terminus, the 376-residue chain is MASSTKKDYYEILGVPRNASQEEIKKAYRRLVRKYHPDICKKPECEEKFKEINEAYQVLSDPEKRKLYDMYGHAAFEGAGAQQRVETTEIPPIEEILREFFDFDIGSIFERATGRRRARRRRSVKGEDIVVPVEITLEEAFKGTTVPIEVEREVPCSACGGTGYDESKSRTCPTCGGRGETVQGNWFFQVRQTCPTCGGEGVIYENCHACTGRGYGLVKETIKVKIPPGVRDGSKLVVEGKGHAGRYGGPPGDLYIIVKVKPHKIFERKGDDLYVDVNITYPEAVLGTEVEVPTLDGEKVKVKIPPGTKEGELIKVPGKGMPRLKGSGRGDLYVRVHIDVPKIGVLSKLLGDGKKVEELLKQLQEVLPKPERIVER.

One can recognise a J domain in the interval 8-72 (DYYEILGVPR…EKRKLYDMYG (65 aa)). The CR-type zinc-finger motif lies at 143 to 219 (GTTVPIEVER…CTGRGYGLVK (77 aa)). Zn(2+) contacts are provided by Cys156, Cys159, Cys172, Cys175, Cys194, Cys197, Cys207, and Cys210. CXXCXGXG motif repeat units lie at residues 156–163 (CSACGGTG), 172–179 (CPTCGGRG), 194–201 (CPTCGGEG), and 207–214 (CHACTGRG).

This sequence belongs to the DnaJ family. Homodimer. Zn(2+) is required as a cofactor.

Its subcellular location is the cytoplasm. In terms of biological role, participates actively in the response to hyperosmotic and heat shock by preventing the aggregation of stress-denatured proteins and by disaggregating proteins, also in an autonomous, DnaK-independent fashion. Unfolded proteins bind initially to DnaJ; upon interaction with the DnaJ-bound protein, DnaK hydrolyzes its bound ATP, resulting in the formation of a stable complex. GrpE releases ADP from DnaK; ATP binding to DnaK triggers the release of the substrate protein, thus completing the reaction cycle. Several rounds of ATP-dependent interactions between DnaJ, DnaK and GrpE are required for fully efficient folding. Also involved, together with DnaK and GrpE, in the DNA replication of plasmids through activation of initiation proteins. This Aquifex aeolicus (strain VF5) protein is Chaperone protein DnaJ 2.